The sequence spans 501 residues: Probable cytochrome P450 28d2 (501 aa).

Heme is bound at residue C446.

The protein belongs to the cytochrome P450 family. Requires heme as cofactor.

It is found in the endoplasmic reticulum membrane. The protein localises to the microsome membrane. May be involved in the metabolism of insect hormones and in the breakdown of synthetic insecticides. The chain is Probable cytochrome P450 28d2 (Cyp28d2) from Drosophila melanogaster (Fruit fly).